A 492-amino-acid chain; its full sequence is Putative cytochrome P450 136 (492 aa).

Cys439 serves as a coordination point for heme.

This sequence belongs to the cytochrome P450 family. Requires heme as cofactor.

The polypeptide is Putative cytochrome P450 136 (cyp136) (Mycobacterium tuberculosis (strain CDC 1551 / Oshkosh)).